We begin with the raw amino-acid sequence, 161 residues long: Cyclic pyranopterin monophosphate synthase (161 aa).

Residues 75–77 (LCH) and 113–114 (ME) contribute to the substrate site. Asp128 is a catalytic residue.

It belongs to the MoaC family. As to quaternary structure, homohexamer; trimer of dimers.

The enzyme catalyses (8S)-3',8-cyclo-7,8-dihydroguanosine 5'-triphosphate = cyclic pyranopterin phosphate + diphosphate. It functions in the pathway cofactor biosynthesis; molybdopterin biosynthesis. In terms of biological role, catalyzes the conversion of (8S)-3',8-cyclo-7,8-dihydroguanosine 5'-triphosphate to cyclic pyranopterin monophosphate (cPMP). This Salmonella dublin (strain CT_02021853) protein is Cyclic pyranopterin monophosphate synthase.